The following is a 127-amino-acid chain: DNA-directed RNA polymerases I, II, and III subunit RPABC2 (127 aa).

Acidic residues predominate over residues 1–34 (MSDNEDNFDGDDFDDVEEDEGLDDLENAEEEGQE). Positions 1-53 (MSDNEDNFDGDDFDDVEEDEGLDDLENAEEEGQENVEILPSGERPQANQKRIT) are disordered. S2 is modified (N-acetylserine). S2 is modified (phosphoserine; by CK2).

Belongs to the archaeal Rpo6/eukaryotic RPB6 RNA polymerase subunit family. Component of the RNA polymerase I (Pol I), RNA polymerase II (Pol II) and RNA polymerase III (Pol III) complexes consisting of at least 13, 12 and 17 subunits, respectively. Pol I complex consists of a ten-subunit catalytic core composed of POLR1A/RPA1, POLR1B/RPA2, POLR1C/RPAC1, POLR1D/RPAC2, POLR1H/RPA12, POLR2E/RPABC1, POLR2F/RPABC2, POLR2H/RPABC3, POLR2K/RPABC4 and POLR2L/RPABC5; a mobile stalk subunit POLR1F/RPA43 protruding from the core and additional subunits homologous to general transcription factors POLR1E/RPA49 and POLR1G/RPA34. Part of Pol I pre-initiation complex (PIC), in which Pol I core assembles with RRN3 and promoter-bound UTBF and SL1/TIF-IB complex. Pol II complex contains a ten-subunit catalytic core composed of POLR2A/RPB1, POLR2B/RPB2, POLR2C/RPB3, POLR2I/RPB9, POLR2J/RPB11, POLR2E/RPABC1, POLR2F/RPABC2, POLR2H/RPABC3, POLR2K/RPABC4 and POLR2L/RPABC5 and a mobile stalk composed of two subunits POLR2D/RPB4 and POLR2G/RPB7. Part of Pol II(G) complex, in which Pol II core associates with an additional subunit POLR2M; unlike conventional Pol II, Pol II(G) functions as a transcriptional repressor. Part of TBP-based Pol II pre-initiation complex (PIC), in which Pol II core assembles with general transcription factors and other specific initiation factors including GTF2E1, GTF2E2, GTF2F1, GTF2F2, TCEA1, ERCC2, ERCC3, GTF2H2, GTF2H3, GTF2H4, GTF2H5, GTF2A1, GTF2A2, GTF2B and TBP; this large multi-subunit PIC complex mediates DNA unwinding and targets Pol II core to the transcription start site where the first phosphodiester bond forms. Pol III complex consists of a ten-subunit catalytic core composed of POLR3A/RPC1, POLR3B/RPC2, POLR1C/RPAC1, POLR1D/RPAC2, POLR3K/RPC10, POLR2E/RPABC1, POLR2F/RPABC2, POLR2H/RPABC3, POLR2K/RPABC4 and POLR2L/RPABC5; a mobile stalk composed of two subunits POLR3H/RPC8 and CRCP/RPC9, protruding from the core and functioning primarily in transcription initiation; and additional subunits homologous to general transcription factors of the RNA polymerase II machinery, POLR3C/RPC3-POLR3F/RPC6-POLR3G/RPC7 heterotrimer required for transcription initiation and POLR3D/RPC4-POLR3E/RPC5 heterodimer involved in both transcription initiation and termination.

The protein resides in the nucleus. Its subcellular location is the nucleolus. Its function is as follows. DNA-dependent RNA polymerase catalyzes the transcription of DNA into RNA using the four ribonucleoside triphosphates as substrates. Common component of RNA polymerases I, II, and III which synthesize ribosomal RNA precursors, mRNA precursors and many functional non-coding RNAs, and small RNAs, such as 5S rRNA and tRNAs, respectively. Pol II is the central component of the basal RNA polymerase II transcription machinery. Pols are composed of mobile elements that move relative to each other. In Pol II, POLR2F/RPABC2 is part of the clamp element and together with parts of POLR2A/RPB1 and POLR2B/RPB2 forms a pocket to which the POLR2D/RPB4-POLR2G/RPB7 subcomplex binds. The polypeptide is DNA-directed RNA polymerases I, II, and III subunit RPABC2 (Homo sapiens (Human)).